The sequence spans 309 residues: Homoserine kinase (309 aa).

Residue 91-101 (PIGSGLGSSAC) participates in ATP binding.

It belongs to the GHMP kinase family. Homoserine kinase subfamily.

The protein localises to the cytoplasm. It catalyses the reaction L-homoserine + ATP = O-phospho-L-homoserine + ADP + H(+). It functions in the pathway amino-acid biosynthesis; L-threonine biosynthesis; L-threonine from L-aspartate: step 4/5. In terms of biological role, catalyzes the ATP-dependent phosphorylation of L-homoserine to L-homoserine phosphate. In Escherichia fergusonii (strain ATCC 35469 / DSM 13698 / CCUG 18766 / IAM 14443 / JCM 21226 / LMG 7866 / NBRC 102419 / NCTC 12128 / CDC 0568-73), this protein is Homoserine kinase.